The sequence spans 391 residues: Na(+)/H(+) antiporter NhaA (391 aa).

Helical transmembrane passes span 9–29 (FQLE…ALII), 36–56 (YLYS…LNIA), 59–79 (LLLW…GLEV), 95–115 (ILPA…YWFI), 123–143 (VAGW…VLAL), 154–174 (LFLM…IALF), 177–197 (GTLS…LIAM), 213–235 (LILW…ALAL), 259–279 (WVAY…SLAG), 293–313 (IAVG…WLAV), 329–349 (ILGV…VGSL), and 364–384 (MGIL…TAMA).

Belongs to the NhaA Na(+)/H(+) (TC 2.A.33) antiporter family.

It is found in the cell inner membrane. It carries out the reaction Na(+)(in) + 2 H(+)(out) = Na(+)(out) + 2 H(+)(in). Functionally, na(+)/H(+) antiporter that extrudes sodium in exchange for external protons. This chain is Na(+)/H(+) antiporter NhaA, found in Pseudomonas putida (strain GB-1).